Consider the following 238-residue polypeptide: MNSNASNTPIAIGISQIFPCSYLDGQQEQLLVIQEETLDPILFDRLLAIGFRRSGSAIYKPRCPRCSACQPIRLPIKEFTPSKRQKRTLAHNRDLTWRITSEHTEAQYALYEKYIRERHFDGPMFPPSKTQYEQFLFCHWLPPTFIEVYDGNRLLAVAVTDTLSNSLSAIYSYFDPDEERRSLGSLLILLQCRLAKLQDKEFLYLGYQIDANRKMSYKRLYRPYQILTPQGWEYSQVC.

This sequence belongs to the R-transferase family. Bpt subfamily.

The protein resides in the cytoplasm. The enzyme catalyses N-terminal L-glutamyl-[protein] + L-leucyl-tRNA(Leu) = N-terminal L-leucyl-L-glutamyl-[protein] + tRNA(Leu) + H(+). The catalysed reaction is N-terminal L-aspartyl-[protein] + L-leucyl-tRNA(Leu) = N-terminal L-leucyl-L-aspartyl-[protein] + tRNA(Leu) + H(+). Its function is as follows. Functions in the N-end rule pathway of protein degradation where it conjugates Leu from its aminoacyl-tRNA to the N-termini of proteins containing an N-terminal aspartate or glutamate. This is Aspartate/glutamate leucyltransferase from Shewanella sp. (strain MR-7).